The sequence spans 368 residues: Quinolinate synthase (368 aa).

Iminosuccinate contacts are provided by His-46 and Ser-63. Cys-110 contacts [4Fe-4S] cluster. Residues 141-143 (YVN) and Ser-162 each bind iminosuccinate. Residue Cys-230 participates in [4Fe-4S] cluster binding. Residues 256 to 258 (HPE) and Thr-273 contribute to the iminosuccinate site. A [4Fe-4S] cluster-binding site is contributed by Cys-320.

The protein belongs to the quinolinate synthase family. Type 3 subfamily. [4Fe-4S] cluster is required as a cofactor.

It is found in the cytoplasm. It catalyses the reaction iminosuccinate + dihydroxyacetone phosphate = quinolinate + phosphate + 2 H2O + H(+). The protein operates within cofactor biosynthesis; NAD(+) biosynthesis; quinolinate from iminoaspartate: step 1/1. Its function is as follows. Catalyzes the condensation of iminoaspartate with dihydroxyacetone phosphate to form quinolinate. This Bacillus cereus (strain Q1) protein is Quinolinate synthase.